A 371-amino-acid polypeptide reads, in one-letter code: MPHHYILTLFGLLPVATNISTWWNFGSMLLTCLALQVLTGFFLAVHYTANINLAFSSIIHITRDVPYGWMMQNLHAIGASMFFICIYIHIARGLYYGSYLNKETWMSGITLLITLMATAFFGYVLPWGQMSFWAATVITNLLTAVPYLGTSLTTWLWGGFAINDPTLTRFFALHFILPFEIISLSSLHIILLHEEGSSNPLGTNPDIDKIPFHPYHSHKDLLLLTLMILLLFITMSFFPDIFNDPDNFSKANPLVTPQHIKPEWYFLFAYGILRSIPNKLGGALALVTSIMILFTIPFTHTAHLRPMTFRPLSQLMFWTLVSTFITITWAATKPVEPPFIIISQATSLLYFTFFLSFPILGWTENKMMNTP.

A run of 4 helical transmembrane segments spans residues 25-45, 69-90, 105-125, and 170-190; these read FGSMLLTCLALQVLTGFFLAV, WMMQNLHAIGASMFFICIYIHI, WMSGITLLITLMATAFFGYVL, and FFALHFILPFEIISLSSLHII. 2 residues coordinate heme b: histidine 75 and histidine 89. 2 residues coordinate heme b: histidine 174 and histidine 188. An a ubiquinone-binding site is contributed by histidine 193. 4 consecutive transmembrane segments (helical) span residues 218–238, 280–300, 312–332, and 339–358; these read HKDLLLLTLMILLLFITMSFF, LGGALALVTSIMILFTIPFTH, LSQLMFWTLVSTFITITWAAT, and FIIISQATSLLYFTFFLSFP.

The protein belongs to the cytochrome b family. As to quaternary structure, the cytochrome bc1 complex contains 3 respiratory subunits (MT-CYB, CYC1 and UQCRFS1), 2 core proteins (UQCRC1 and UQCRC2) and probably 6 low-molecular weight proteins. Heme b serves as cofactor.

The protein localises to the mitochondrion inner membrane. Functionally, component of the ubiquinol-cytochrome c reductase complex (complex III or cytochrome b-c1 complex) that is part of the mitochondrial respiratory chain. The b-c1 complex mediates electron transfer from ubiquinol to cytochrome c. Contributes to the generation of a proton gradient across the mitochondrial membrane that is then used for ATP synthesis. The protein is Cytochrome b (MT-CYB) of Apodora papuana (Papuan olive python).